A 78-amino-acid chain; its full sequence is Acyl carrier protein (78 aa).

The region spanning 2–77 (STIEERVKKI…AAIDYINGHQ (76 aa)) is the Carrier domain. Serine 37 carries the O-(pantetheine 4'-phosphoryl)serine modification.

Belongs to the acyl carrier protein (ACP) family. 4'-phosphopantetheine is transferred from CoA to a specific serine of apo-ACP by AcpS. This modification is essential for activity because fatty acids are bound in thioester linkage to the sulfhydryl of the prosthetic group.

Its subcellular location is the cytoplasm. The protein operates within lipid metabolism; fatty acid biosynthesis. Its function is as follows. Carrier of the growing fatty acid chain in fatty acid biosynthesis. The sequence is that of Acyl carrier protein from Erwinia tasmaniensis (strain DSM 17950 / CFBP 7177 / CIP 109463 / NCPPB 4357 / Et1/99).